We begin with the raw amino-acid sequence, 683 residues long: E3 ubiquitin-protein ligase RNF103 (683 aa).

A run of 4 helical transmembrane segments spans residues 6–26 (FFLL…EAIV), 326–346 (LFVL…FITQ), 366–386 (LLII…LDSF), and 411–431 (MFYT…GLLI). Residues 525–542 (EEMSESSQDTENDSDSDN) show a composition bias toward acidic residues. The segment at 525 to 548 (EEMSESSQDTENDSDSDNMDTFSS) is disordered. The RING-type zinc-finger motif lies at 619-661 (CVVCLENFENGCLLMGLPCGHVFHQNCIVMWLAGGRHCCPVCR).

In terms of assembly, interacts with DERL1 and VCP. Highly expressed in the normal cerebellum but not in the cerebral cortex.

The protein localises to the endoplasmic reticulum membrane. The enzyme catalyses S-ubiquitinyl-[E2 ubiquitin-conjugating enzyme]-L-cysteine + [acceptor protein]-L-lysine = [E2 ubiquitin-conjugating enzyme]-L-cysteine + N(6)-ubiquitinyl-[acceptor protein]-L-lysine.. It functions in the pathway protein modification; protein ubiquitination. In terms of biological role, acts as an E2-dependent E3 ubiquitin-protein ligase, probably involved in the ER-associated protein degradation pathway. In Mus musculus (Mouse), this protein is E3 ubiquitin-protein ligase RNF103 (Rnf103).